We begin with the raw amino-acid sequence, 924 residues long: Type II inositol 3,4-bisphosphate 4-phosphatase (924 aa).

The span at 1–13 (MEIKEEGASEEGQ) shows a compositional bias: basic and acidic residues. Disordered stretches follow at residues 1 to 25 (MEIKEEGASEEGQHFLPTAQASDPG), 481 to 516 (ILKKPPSPKSSTEESSPQDQPPLMRGQDSIPHHSDY), and 546 to 569 (DGGSEGSGGNNDGEKEPSLADAIP). The region spanning 23–165 (DPGDCQFTSI…LKSKEQLLVL (143 aa)) is the C2 domain.

This sequence belongs to the inositol 3,4-bisphosphate 4-phosphatase family.

The enzyme catalyses a 1,2-diacyl-sn-glycero-3-phospho-(1D-myo-inositol-3,4-bisphosphate) + H2O = a 1,2-diacyl-sn-glycero-3-phospho-(1D-myo-inositol-3-phosphate) + phosphate. It catalyses the reaction 1D-myo-inositol 1,3,4-trisphosphate + H2O = 1D-myo-inositol 1,3-bisphosphate + phosphate. The catalysed reaction is 1D-myo-inositol 3,4-bisphosphate + H2O = 1D-myo-inositol 3-phosphate + phosphate. Its pathway is signal transduction; phosphatidylinositol signaling pathway. With respect to regulation, strongly inhibited by inositol hexakisphosphate. Catalyzes the hydrolysis of the 4-position phosphate of phosphatidylinositol 3,4-bisphosphate, inositol 1,3,4-trisphosphate and inositol 3,4-bisphosphate. Plays a role in the late stages of macropinocytosis by dephosphorylating phosphatidylinositol 3,4-bisphosphate in membrane ruffles. Antagonizes the PI3K-AKT/PKB signaling pathway by dephosphorylating phosphoinositides and thereby modulating cell cycle progression and cell survival. The protein is Type II inositol 3,4-bisphosphate 4-phosphatase (INPP4B) of Pongo abelii (Sumatran orangutan).